The following is a 427-amino-acid chain: Enolase (427 aa).

Gln163 is a (2R)-2-phosphoglycerate binding site. The active-site Proton donor is the Glu205. Residues Asp242, Glu285, and Asp312 each coordinate Mg(2+). (2R)-2-phosphoglycerate is bound by residues Lys337, Arg366, Ser367, and Lys388. Lys337 (proton acceptor) is an active-site residue.

This sequence belongs to the enolase family. It depends on Mg(2+) as a cofactor.

Its subcellular location is the cytoplasm. The protein resides in the secreted. The protein localises to the cell surface. It carries out the reaction (2R)-2-phosphoglycerate = phosphoenolpyruvate + H2O. It functions in the pathway carbohydrate degradation; glycolysis; pyruvate from D-glyceraldehyde 3-phosphate: step 4/5. Its function is as follows. Catalyzes the reversible conversion of 2-phosphoglycerate (2-PG) into phosphoenolpyruvate (PEP). It is essential for the degradation of carbohydrates via glycolysis. This chain is Enolase, found in Bradyrhizobium sp. (strain BTAi1 / ATCC BAA-1182).